Consider the following 439-residue polypeptide: Testican-1 (439 aa).

Residues 1–21 (MPAIAVLAAAAAAWCFLQVES) form the signal peptide. Cystine bridges form between Cys86/Cys97, Cys91/Cys107, Cys136/Cys166, Cys139/Cys159, and Cys148/Cys180. The Kazal-like domain maps to 130-182 (PSNLVKCKPCPVAQSAMVCGSDGHSYTSKCKLEFHACSTGKSLATLCDGPCPC). Thr228 carries an O-linked (GalNAc...) threonine glycan. One can recognise a Thyroglobulin type-1 domain in the interval 310-376 (GLPCQNEMNR…GSRKQGAVSC (67 aa)). 3 disulfide bridges follow: Cys313–Cys337, Cys348–Cys355, and Cys357–Cys376. O-linked (Xyl...) (glycosaminoglycan) serine glycosylation is found at Ser383 and Ser388. The interval 415–439 (VHTRAVTEDDEDEDDDKEDEVGYIW) is disordered. A compositionally biased stretch (acidic residues) spans 422 to 439 (EDDEDEDDDKEDEVGYIW).

Post-translationally, O-glycosylated. Glycosaminoglycan that contains chondroitin sulfate and heparan sulfate.

The protein localises to the secreted. The protein resides in the extracellular space. It localises to the extracellular matrix. Its function is as follows. May play a role in cell-cell and cell-matrix interactions. May contribute to various neuronal mechanisms in the central nervous system. The sequence is that of Testican-1 (SPOCK1) from Homo sapiens (Human).